A 189-amino-acid polypeptide reads, in one-letter code: Cytochrome b6-f complex subunit 4 (189 aa).

3 consecutive transmembrane segments (helical) span residues 36-56, 103-123, and 139-159; these read LSYIFPVVILGTIACTIGLAV, LLGVLLMASVPAGSLTVPFLE, and TVSLIGTAVALWLGIGAALPI.

This sequence belongs to the cytochrome b family. PetD subfamily. In terms of assembly, the 4 large subunits of the cytochrome b6-f complex are cytochrome b6, subunit IV (17 kDa polypeptide, petD), cytochrome f and the Rieske protein, while the 4 small subunits are petG, petL, petM and petN. The complex functions as a dimer.

The protein resides in the plastid. Its subcellular location is the chloroplast thylakoid membrane. Its function is as follows. Component of the cytochrome b6-f complex, which mediates electron transfer between photosystem II (PSII) and photosystem I (PSI), cyclic electron flow around PSI, and state transitions. This is Cytochrome b6-f complex subunit 4 from Pinus koraiensis (Korean pine).